Reading from the N-terminus, the 244-residue chain is 1-(5-phosphoribosyl)-5-[(5-phosphoribosylamino)methylideneamino] imidazole-4-carboxamide isomerase (244 aa).

D8 serves as the catalytic Proton acceptor. Catalysis depends on D130, which acts as the Proton donor.

This sequence belongs to the HisA/HisF family.

It is found in the cytoplasm. The catalysed reaction is 1-(5-phospho-beta-D-ribosyl)-5-[(5-phospho-beta-D-ribosylamino)methylideneamino]imidazole-4-carboxamide = 5-[(5-phospho-1-deoxy-D-ribulos-1-ylimino)methylamino]-1-(5-phospho-beta-D-ribosyl)imidazole-4-carboxamide. Its pathway is amino-acid biosynthesis; L-histidine biosynthesis; L-histidine from 5-phospho-alpha-D-ribose 1-diphosphate: step 4/9. The sequence is that of 1-(5-phosphoribosyl)-5-[(5-phosphoribosylamino)methylideneamino] imidazole-4-carboxamide isomerase from Syntrophomonas wolfei subsp. wolfei (strain DSM 2245B / Goettingen).